The sequence spans 119 residues: Host cell factor C1 regulator 1 (119 aa).

The interval 1–34 (MILQQPLERGPQGRAQRDPRAASGASGGLDAREP) is disordered. Residues 57–60 (DHPY) are interaction with HCFC1. The Nuclear export signal motif lies at 91-100 (IPEALRLLRL).

Interacts with HCFC1.

It localises to the cytoplasm. The protein localises to the nucleus. In terms of biological role, regulates HCFC1 activity by modulating its subcellular localization. Overexpression of HCFC1R1 leads to accumulation of HCFC1 in the cytoplasm. HCFC1R1-mediated export may provide the pool of cytoplasmic HCFC1 required for import of virion-derived VP16 into the nucleus. The polypeptide is Host cell factor C1 regulator 1 (HCFC1R1) (Bos taurus (Bovine)).